The sequence spans 361 residues: Lactate-binding periplasmic protein TTHA0766 (361 aa).

Residues methionine 1–alanine 22 constitute a signal peptide (tat-type signal). Substrate is bound by residues tyrosine 101, asparagine 158, and arginine 178. A Ca(2+)-binding site is contributed by asparagine 158. Residues aspartate 216, phenylalanine 217, and glutamine 247 each coordinate Ca(2+). Residues phenylalanine 217 and glutamine 247–aspartate 250 contribute to the substrate site.

Belongs to the bacterial solute-binding protein 7 family. Homodimer. The complex comprises the extracytoplasmic solute receptor protein TTHA0766, and the two putative transmembrane proteins TTHA0767 and TTHA0768.

Its subcellular location is the periplasm. Its function is as follows. Part of the tripartite ATP-independent periplasmic (TRAP) transport system involved in the uptake of lactate. This protein specifically binds L-lactate. The chain is Lactate-binding periplasmic protein TTHA0766 from Thermus thermophilus (strain ATCC 27634 / DSM 579 / HB8).